A 417-amino-acid chain; its full sequence is Serine hydroxymethyltransferase (417 aa).

(6S)-5,6,7,8-tetrahydrofolate contacts are provided by residues leucine 121 and 125–127 (GHL). N6-(pyridoxal phosphate)lysine is present on lysine 229. Residue 355-357 (SPF) coordinates (6S)-5,6,7,8-tetrahydrofolate.

The protein belongs to the SHMT family. Homodimer. Pyridoxal 5'-phosphate serves as cofactor.

Its subcellular location is the cytoplasm. It carries out the reaction (6R)-5,10-methylene-5,6,7,8-tetrahydrofolate + glycine + H2O = (6S)-5,6,7,8-tetrahydrofolate + L-serine. Its pathway is one-carbon metabolism; tetrahydrofolate interconversion. The protein operates within amino-acid biosynthesis; glycine biosynthesis; glycine from L-serine: step 1/1. Catalyzes the reversible interconversion of serine and glycine with tetrahydrofolate (THF) serving as the one-carbon carrier. This reaction serves as the major source of one-carbon groups required for the biosynthesis of purines, thymidylate, methionine, and other important biomolecules. Also exhibits THF-independent aldolase activity toward beta-hydroxyamino acids, producing glycine and aldehydes, via a retro-aldol mechanism. The polypeptide is Serine hydroxymethyltransferase (Salmonella arizonae (strain ATCC BAA-731 / CDC346-86 / RSK2980)).